Reading from the N-terminus, the 226-residue chain is 2,3-bisphosphoglycerate-dependent phosphoglycerate mutase (226 aa).

Substrate is bound by residues 8–15 (RHGQSVWN), 21–22 (TG), Arg58, 109–112 (ERMY), Lys120, 136–137 (RR), and 180–181 (GN). Residue His9 is the Tele-phosphohistidine intermediate of the active site. Catalysis depends on Glu109, which acts as the Proton donor/acceptor.

Belongs to the phosphoglycerate mutase family. BPG-dependent PGAM subfamily.

The enzyme catalyses (2R)-2-phosphoglycerate = (2R)-3-phosphoglycerate. It participates in carbohydrate degradation; glycolysis; pyruvate from D-glyceraldehyde 3-phosphate: step 3/5. Its function is as follows. Catalyzes the interconversion of 2-phosphoglycerate and 3-phosphoglycerate. This Chlamydia trachomatis serovar A (strain ATCC VR-571B / DSM 19440 / HAR-13) protein is 2,3-bisphosphoglycerate-dependent phosphoglycerate mutase.